A 261-amino-acid polypeptide reads, in one-letter code: G patch domain-containing protein 11 (261 aa).

Disordered stretches follow at residues 1 to 67 (MEEE…LNEA), 88 to 124 (ALGK…AEEN), and 184 to 213 (EAWY…LVEE). Basic and acidic residues-rich tracts occupy residues 29 to 64 (RVKE…DTKL) and 111 to 124 (IGHE…AEEN). A coiled-coil region spans residues 31–65 (KECYEKEEKHKEANIKNRQQKLKDVEKEKRDTKLN). The G-patch domain occupies 70 to 116 (NENKGFALLQKMGYKKGQALGKKGDGIVEPIPLNIKTGRSGIGHEEM). A coiled-coil region spans residues 190–222 (KMNEQEADEEADEETEEDEDLVEEELSTLEKLQ). Positions 194-213 (QEADEEADEETEEDEDLVEE) are enriched in acidic residues.

The protein belongs to the GPATCH11 family.

The protein localises to the chromosome. It localises to the centromere. Its subcellular location is the kinetochore. This Xenopus tropicalis (Western clawed frog) protein is G patch domain-containing protein 11 (gpatch11).